The sequence spans 204 residues: N-(5'-phosphoribosyl)anthranilate isomerase (204 aa).

Belongs to the TrpF family.

The catalysed reaction is N-(5-phospho-beta-D-ribosyl)anthranilate = 1-(2-carboxyphenylamino)-1-deoxy-D-ribulose 5-phosphate. It participates in amino-acid biosynthesis; L-tryptophan biosynthesis; L-tryptophan from chorismate: step 3/5. This is N-(5'-phosphoribosyl)anthranilate isomerase from Bacillus anthracis (strain A0248).